A 455-amino-acid polypeptide reads, in one-letter code: Venom prothrombin activator notecarin-D1 (455 aa).

The signal sequence occupies residues 1-20 (MAPQLLLCLILTFLWSLPEA). Residues 21 to 40 (ESNVFLKSKVANRFLQRTKR) constitute a propeptide that is removed on maturation. Positions 41-86 (SNSLFEEIRPGNIERECIEEKCSKEEAREVFEDNEKTETFWNVYVD) constitute a Gla domain. Residues E46, E47, E54, E56, E59, E60, E65, E66, E69, E72, and E75 each carry the 4-carboxyglutamate modification. Residues C57 and C62 are joined by a disulfide bond. The EGF-like 1; calcium-binding domain maps to 86–122 (DGDQCSSNPCHYRGTCKDGIGSYTCTCLPNYEGKNCE). Disulfide bonds link C90–C101, C95–C110, C112–C121, C129–C140, C136–C149, C151–C164, C172–C328, C216–C221, C236–C252, C376–C390, and C401–C429. S92 is a glycosylation site (O-linked (Hex...) serine). The region spanning 129-164 (CRVDNGNCWHFCKRVQSETQCSCAESYRLGVDGHSC) is the EGF-like 2 domain. A propeptide spans 182–209 (REASLPDFVQSQKATLLKKSDNPSPDIR) (activation peptide). The region spanning 210-453 (IVNGMDCKLG…FIPWIKKIMS (244 aa)) is the Peptidase S1 domain. Residue H251 is the Charge relay system of the active site. N-linked (GlcNAc...) asparagine glycosylation is present at N254. The Charge relay system role is filled by D308. S405 acts as the Charge relay system in catalysis.

This sequence belongs to the peptidase S1 family. Snake venom subfamily. In terms of assembly, heterodimer of a light chain and a heavy chain; disulfide-linked. Post-translationally, gamma-carboxyglutamate residues are formed by vitamin K dependent carboxylation. These residues are essential for the binding of calcium. In terms of tissue distribution, expressed by the venom gland.

It is found in the secreted. The catalysed reaction is Selective cleavage of Arg-|-Thr and then Arg-|-Ile bonds in prothrombin to form thrombin.. Snake prothrombin activator that attacks the hemostatic system of prey. This protein is functionally similar to blood coagulation factor Xa. In Notechis scutatus scutatus (Mainland tiger snake), this protein is Venom prothrombin activator notecarin-D1.